The sequence spans 502 residues: Probable glycine dehydrogenase (decarboxylating) subunit 2 (502 aa).

Lysine 273 is subject to N6-(pyridoxal phosphate)lysine.

The protein belongs to the GcvP family. C-terminal subunit subfamily. In terms of assembly, the glycine cleavage system is composed of four proteins: P, T, L and H. In this organism, the P 'protein' is a heterodimer of two subunits. It depends on pyridoxal 5'-phosphate as a cofactor.

The enzyme catalyses N(6)-[(R)-lipoyl]-L-lysyl-[glycine-cleavage complex H protein] + glycine + H(+) = N(6)-[(R)-S(8)-aminomethyldihydrolipoyl]-L-lysyl-[glycine-cleavage complex H protein] + CO2. In terms of biological role, the glycine cleavage system catalyzes the degradation of glycine. The P protein binds the alpha-amino group of glycine through its pyridoxal phosphate cofactor; CO(2) is released and the remaining methylamine moiety is then transferred to the lipoamide cofactor of the H protein. In Thermococcus gammatolerans (strain DSM 15229 / JCM 11827 / EJ3), this protein is Probable glycine dehydrogenase (decarboxylating) subunit 2.